A 365-amino-acid chain; its full sequence is Aminomethyltransferase (365 aa).

This sequence belongs to the GcvT family. The glycine cleavage system is composed of four proteins: P, T, L and H.

It catalyses the reaction N(6)-[(R)-S(8)-aminomethyldihydrolipoyl]-L-lysyl-[protein] + (6S)-5,6,7,8-tetrahydrofolate = N(6)-[(R)-dihydrolipoyl]-L-lysyl-[protein] + (6R)-5,10-methylene-5,6,7,8-tetrahydrofolate + NH4(+). In terms of biological role, the glycine cleavage system catalyzes the degradation of glycine. This chain is Aminomethyltransferase, found in Chlorobium phaeovibrioides (strain DSM 265 / 1930) (Prosthecochloris vibrioformis (strain DSM 265)).